We begin with the raw amino-acid sequence, 65 residues long: Adrenergic toxin rho-elapitoxin-Dp1a (65 aa).

4 disulfide bridges follow: Cys-3–Cys-24, Cys-17–Cys-42, Cys-46–Cys-57, and Cys-58–Cys-63.

It belongs to the three-finger toxin family. Short-chain subfamily. Aminergic toxin sub-subfamily. As to expression, expressed by the venom gland.

Its subcellular location is the secreted. Its function is as follows. This toxin shows activities on different G-protein coupled receptors. It is highly potent on various alpha-adrenoceptors (ADRA) (subnanomolar affinity for ADRA1A). Order of potency is the following: ADRA1A &gt; ADRA1B &gt; ADRA1D &gt; ADRA2C. It is also found to reversibly bind to muscarinic acetylcholine receptors (CHRM), but the affinity is much weaker (CHRM1 and CHRM2, Ki&gt;1 uM; CHRM3, Ki=140 nM; CHRM4, Ki=120 nM; CHRM5, Ki=350 nM). This Dendroaspis polylepis polylepis (Black mamba) protein is Adrenergic toxin rho-elapitoxin-Dp1a.